Here is a 450-residue protein sequence, read N- to C-terminus: Chromosomal replication initiator protein DnaA (450 aa).

Residues 1-71 are domain I, interacts with DnaA modulators; that stretch reads MEDVWLQAQS…SVRSLTDSHF (71 aa). The domain II stretch occupies residues 71–113; that stretch reads FQVELQVAARQQEKTAKSPRKSHTEDELGPVESEKCAPAEFST. The disordered stretch occupies residues 82–103; it reads QEKTAKSPRKSHTEDELGPVES. Residues 114 to 330 are domain III, AAA+ region; the sequence is NLNAKYTFDT…GMLIRLGAVA (217 aa). Residues glycine 158, glycine 160, lysine 161, and threonine 162 each coordinate ATP. The interval 331–450 is domain IV, binds dsDNA; that stretch reads SLTGKNITLD…IETLRKGLLN (120 aa).

The protein belongs to the DnaA family. In terms of assembly, oligomerizes as a right-handed, spiral filament on DNA at oriC.

The protein resides in the cytoplasm. Its function is as follows. Plays an essential role in the initiation and regulation of chromosomal replication. ATP-DnaA binds to the origin of replication (oriC) to initiate formation of the DNA replication initiation complex once per cell cycle. Binds the DnaA box (a 9 base pair repeat at the origin) and separates the double-stranded (ds)DNA. Forms a right-handed helical filament on oriC DNA; dsDNA binds to the exterior of the filament while single-stranded (ss)DNA is stabiized in the filament's interior. The ATP-DnaA-oriC complex binds and stabilizes one strand of the AT-rich DNA unwinding element (DUE), permitting loading of DNA polymerase. After initiation quickly degrades to an ADP-DnaA complex that is not apt for DNA replication. Binds acidic phospholipids. This is Chromosomal replication initiator protein DnaA from Geobacter metallireducens (strain ATCC 53774 / DSM 7210 / GS-15).